The primary structure comprises 265 residues: Indole-3-glycerol phosphate synthase (265 aa).

It belongs to the TrpC family.

The enzyme catalyses 1-(2-carboxyphenylamino)-1-deoxy-D-ribulose 5-phosphate + H(+) = (1S,2R)-1-C-(indol-3-yl)glycerol 3-phosphate + CO2 + H2O. It participates in amino-acid biosynthesis; L-tryptophan biosynthesis; L-tryptophan from chorismate: step 4/5. The protein is Indole-3-glycerol phosphate synthase of Chromobacterium violaceum (strain ATCC 12472 / DSM 30191 / JCM 1249 / CCUG 213 / NBRC 12614 / NCIMB 9131 / NCTC 9757 / MK).